A 759-amino-acid chain; its full sequence is MGLPPLEFSDCYLDSPQFRERLKSHEIELDKTNKFIKELIKDGKSLVAAHKNLSCAKRKFAGSLNEFKFRCIGDAETDDEICIARSLQEFAAVLGNLEDERIRMIDNSGEVLISPLEKFRKEQVGAAKEVKKKYDKESEKYCAMLEKHMNLSSKKKEVLLHEADVQLDQMRQHFYEVSLEYVLKVHEVQERKMFEFVEPLLAFLQGLFTFYHHGYELAKDFSDFKTQLSISIQNTRDRFEGTRSEVESLMKKMKENPHEHLALSPYTMEGYLYVQEKRHFGTSWVKHYCTYQRETKQMTMVPFDQKSGGKVGEEEIIHLKSCIRRKTESIEKRFCFDVEGVDRPTVLTMQALSEEDRKLWMEAMDGREPVYNSNKDSQSEGTAQLDNIGFSIIRKCIQAVETRGINEQGLYRIVGVNSRVQKLLNFLMDPKISPETETEIPSEWEIKTITSSLKTYLRMLPGPLMTYQFQRSFIKAAKLENQESRIKEIHCLIHRLPEKNRQMLNLLMTHLANVAAHHKQNLMTVANLGIVFGPTLLRPQEETVAAIMDIKFQNIVVEIIIENYEKMFSTVPEMPQTNSQLHLSRKRSSDSKPPSCSERPLTLFHTTHNTEKEEKRNSVNSSAESVSSSNANSSANSTCTQCSNMNNLNASDPDLDVAKASRPNSLSLNPSPTSPPTCPMFSAPSSPMPTSSTSSDSSPVSVPRKAKALYACKAEHDSELSFSAGTVFDNVYPSQEPGWLEGILNGKTGLIPENYVEFL.

Residues 7–262 (EFSDCYLDSP…MKENPHEHLA (256 aa)) enclose the BAR domain. The PH domain maps to 265–369 (PYTMEGYLYV…WMEAMDGREP (105 aa)). Residues 383–568 (AQLDNIGFSI…IIIENYEKMF (186 aa)) form the Rho-GAP domain. Residues 578–701 (NSQLHLSRKR…STSSDSSPVS (124 aa)) are disordered. Over residues 608–617 (HNTEKEEKRN) the composition is skewed to basic and acidic residues. Residues 618-637 (SVNSSAESVSSSNANSSANS) show a composition bias toward low complexity. Residues 638 to 650 (TCTQCSNMNNLNA) are compositionally biased toward polar residues. Residues 679 to 701 (PMFSAPSSPMPTSSTSSDSSPVS) are compositionally biased toward low complexity. Positions 701–759 (SVPRKAKALYACKAEHDSELSFSAGTVFDNVYPSQEPGWLEGILNGKTGLIPENYVEFL) constitute an SH3 domain.

Its subcellular location is the cell junction. The protein resides in the focal adhesion. It localises to the cytoplasm. The protein localises to the cytoskeleton. It is found in the endosome membrane. GTPase-activating protein for rhoa and cdc42. The protein is Rho GTPase-activating protein 26 (arhgap26) of Xenopus tropicalis (Western clawed frog).